A 32-amino-acid polypeptide reads, in one-letter code: Cytochrome b6-f complex subunit 7 (32 aa).

Residues Ala-9–Leu-27 form a helical membrane-spanning segment.

The protein belongs to the PetM family. In terms of assembly, the 4 large subunits of the cytochrome b6-f complex are cytochrome b6, subunit IV (17 kDa polypeptide, PetD), cytochrome f and the Rieske protein, while the 4 small subunits are PetG, PetL, PetM and PetN. The complex functions as a dimer.

The protein localises to the cellular thylakoid membrane. In terms of biological role, component of the cytochrome b6-f complex, which mediates electron transfer between photosystem II (PSII) and photosystem I (PSI), cyclic electron flow around PSI, and state transitions. The protein is Cytochrome b6-f complex subunit 7 of Prochlorococcus marinus (strain MIT 9211).